A 2097-amino-acid polypeptide reads, in one-letter code: SCAR-like protein 1 (2097 aa).

Disordered regions lie at residues 205–227 (IANS…PRTT), 544–565 (AHSS…SIES), 1443–1467 (SQIA…PLSS), 1588–1616 (STEE…DPQK), 1730–1802 (QERV…EKTV), 1820–1842 (ASSH…PVTS), and 1893–1944 (YEGP…EGGY). Low complexity predominate over residues 549–562 (KQSSQKSSGLDGSS). A compositionally biased stretch (polar residues) spans 1443–1454 (SQIASCSPTPSN). Residues 1766 to 1794 (SISQQGLQGSVFPSDTSDNGEHSSYTSRA) show a composition bias toward polar residues. A compositionally biased stretch (basic and acidic residues) spans 1908-1922 (YPHDDHNSEKEDIHQ). The WH2 domain occupies 2028 to 2046 (ERNLLLEQIRNKTFNLKPV).

Belongs to the SCAR/WAVE family.

The protein localises to the cytoplasm. Its subcellular location is the cytoskeleton. In terms of biological role, involved in regulation of actin and microtubule organization. Part of a WAVE complex that activates the Arp2/3 complex. This chain is SCAR-like protein 1, found in Oryza sativa subsp. japonica (Rice).